The following is a 429-amino-acid chain: Serine hydroxymethyltransferase (429 aa).

(6S)-5,6,7,8-tetrahydrofolate contacts are provided by residues Leu-128 and 132-134 (GHL). An N6-(pyridoxal phosphate)lysine modification is found at Lys-237.

Belongs to the SHMT family. Homodimer. The cofactor is pyridoxal 5'-phosphate.

It localises to the cytoplasm. The catalysed reaction is (6R)-5,10-methylene-5,6,7,8-tetrahydrofolate + glycine + H2O = (6S)-5,6,7,8-tetrahydrofolate + L-serine. It participates in one-carbon metabolism; tetrahydrofolate interconversion. The protein operates within amino-acid biosynthesis; glycine biosynthesis; glycine from L-serine: step 1/1. Its function is as follows. Catalyzes the reversible interconversion of serine and glycine with tetrahydrofolate (THF) serving as the one-carbon carrier. This reaction serves as the major source of one-carbon groups required for the biosynthesis of purines, thymidylate, methionine, and other important biomolecules. Also exhibits THF-independent aldolase activity toward beta-hydroxyamino acids, producing glycine and aldehydes, via a retro-aldol mechanism. The polypeptide is Serine hydroxymethyltransferase (Caulobacter vibrioides (strain ATCC 19089 / CIP 103742 / CB 15) (Caulobacter crescentus)).